A 332-amino-acid polypeptide reads, in one-letter code: MLQAIGWPWPGPPADAAWQAMCAVYSQCRPARVIEQHRSGYVVAEAPEVPIKVESLPAWQRRGFPPHERAVVGDWVLLDGRRIVALLPRRTVIKRLAAGKHYRQQLIAANLDTAFIVCGLDGDFNPRRIERYCVLIASGGVEPVVVLTKVDLCVDVGAAVAVLREHFSQALAVVAVDARKAEPVVALYPWLLPGRTVALLGSSGAGKSTLTNTLLGEQRMKVGEVRQRDSRGRHTTTHRALLPLPSGACLIDTPGMRELKFTGEEDLVEEFADIELLATQCRFRDCAHQVEPGCAVRAAIGCGTLDPQRLHHYFKLRGEIVGAADRSMLRRY.

Residues 103–259 (RQQLIAANLD…LIDTPGMREL (157 aa)) form the CP-type G domain. Residues 148-151 (TKVD) and 201-209 (GSSGAGKST) contribute to the GTP site. Residues Cys-281, Cys-286, His-288, and Cys-294 each contribute to the Zn(2+) site.

The protein belongs to the TRAFAC class YlqF/YawG GTPase family. RsgA subfamily. As to quaternary structure, monomer. Associates with 30S ribosomal subunit, binds 16S rRNA. Zn(2+) is required as a cofactor.

It localises to the cytoplasm. In terms of biological role, one of several proteins that assist in the late maturation steps of the functional core of the 30S ribosomal subunit. Helps release RbfA from mature subunits. May play a role in the assembly of ribosomal proteins into the subunit. Circularly permuted GTPase that catalyzes slow GTP hydrolysis, GTPase activity is stimulated by the 30S ribosomal subunit. The sequence is that of Small ribosomal subunit biogenesis GTPase RsgA from Xylella fastidiosa (strain M12).